Reading from the N-terminus, the 1183-residue chain is MNKNVLKFMVFIMLLNIITPLFNKNEAFAARDISSTNVTDLTVSPSKIEDGGKTTVKMTFDDKNGKIQNGDMIKVAWPTSGTVKIEGYSKTVPLTVKGEQVGQAVITPDGATITFNDKVEKLSDVSGFAEFEVQGRNLTQTNTSDDKVATITSGNKSTNVTVHKSEAGTSSVFYYKTGDMLPEDTTHVRWFLNINNEKSYVSKDITIKDQIQGGQQLDLSTLNINVTGTHSNYYSGQSAITDFEKAFPGSKITVDNTKNTIDVTIPQGYGSYNSFSINYKTKITNEQQKEFVNNSQAWYQEHGKEEVNGKSFNHTVHNINANAGIEGTVKGELKVLKQDKDTKAPIANVKFKLSKKDGSVVKDNQKEIEIITDANGIANIKALPSGDYILKEIEAPRPYTFDKDKEYPFTMKDTDNQGYFTTIENAKAIEKTKDVSAQKVWEGTQKVKPTIYFKLYKQDDNQNTTPVDKAEIKKLEDGTTKVTWSNLPENDKNGKAIKYLVKEVNAQGEDTTPEGYTKKENGLVVTNTEKPIETTSISGEKVWDDKDNQDGKRPEKVSVNLLANGEKVKTLDVTSETNWKYEFKDLPKYDEGKKIEYTVTEDHVKDYTTDINGTTITNKYTPGETSATVTKNWDDNNNQDGKRPTEIKVELYQDGKATGKTAILNESNNWTHTWTGLDEKAKGQQVKYTVEELTKVKGYTTHVDNNDMGNLIVTNKYTPETTSISGEKVWDDKDNQDGKRPEKVSVNLLADGEKVKTLDVTSETNWKYEFKDLPKYDEGKKIEYTVTEDHVKDYTTDINGTTITNKYTPGETSATVTKNWDDNNNQDGKRPTEIKVELYQDGKATGKTAILNESNNWTHTWTGLDEKAKGQQVKYTVEELTKVKGYTTHVDNNDMGNLIVTNKYTPETTSISGEKVWDDKDNQDGKRPEKVSVNLLANGEKVKTLDVTSETNWKYEFKDLPKYDEGKKIEYTVTEDHVKDYTTDINGTTITNKYTPGETSATVTKNWDDNNNQDGKRPTEIKVELYQDGKATGKTAILNESNNWTHTWTGLDEKAKGQQVKYTVDELTKVNGYTTHVDNNDMGNLIVTNKYTPKKPNKPIYPEKPKDKTPPTKPDHSNKVKPTPPDKPSKVDKDDQPKDNKTKPENPLKELPKTGMKIITSWITWVFIGILGLYLILRKRFNS.

An N-terminal signal peptide occupies residues 1 to 29; it reads MNKNVLKFMVFIMLLNIITPLFNKNEAFA. Residues 151–318 are collagen-binding; sequence ITSGNKSTNV…GKSFNHTVHN (168 aa). 7 cross-links (isoaspartyl lysine isopeptide (Lys-Asn)) span residues 176–293, 541–618, 631–715, 728–805, 818–902, 915–992, and 1005–1089; these read KTGD…EFVN, KVWD…TITN, and KNWD…IVTN. Residues 533 to 719 form a B1 repeat; it reads ETTSISGEKV…NLIVTNKYTP (187 aa). The segment at 533–1093 is 3 X 187 AA approximate tandem repeats; the sequence is ETTSISGEKV…NLIVTNKYTP (561 aa). Residues 720–906 form a B2 repeat; sequence ETTSISGEKV…NLIVTNKYTP (187 aa). Residues 907-1093 form a B3 repeat; that stretch reads ETTSISGEKV…NLIVTNKYTP (187 aa). The disordered stretch occupies residues 1074–1150; that stretch reads TTHVDNNDMG…KTKPENPLKE (77 aa). Basic and acidic residues-rich tracts occupy residues 1101 to 1118 and 1127 to 1150; these read YPEKPKDKTPPTKPDHSN and KPSKVDKDDQPKDNKTKPENPLKE. Residues 1151–1155 carry the LPXTG sorting signal motif; that stretch reads LPKTG. The residue at position 1154 (Thr1154) is a Pentaglycyl murein peptidoglycan amidated threonine. Positions 1155–1183 are cleaved as a propeptide — removed by sortase; that stretch reads GMKIITSWITWVFIGILGLYLILRKRFNS.

In terms of assembly, interacts (via N-terminus) with type I collagen. Interacts with host C1QA.

Its subcellular location is the secreted. The protein resides in the cell wall. Its function is as follows. Collagen-binding adhesin that mediates bacterial adherence to collagenous tissues such as cartilage. Participates in the infectious process by acting as a virulence factor in many different animal models of staphylococcal infections including arthritis, endocarditis and keratitis. Inhibits the activation of the classical complement pathway by interacting with host C1q and interfering with the association between host C1r with C1q. In Staphylococcus aureus, this protein is Collagen adhesin (cna).